A 589-amino-acid polypeptide reads, in one-letter code: Kelch-like protein 25 (589 aa).

In terms of domain architecture, BTB spans 46–114; that stretch reads TDVTLWAGDR…AYSSRIVINE (69 aa). One can recognise a BACK domain in the interval 149–250; sequence CLGMMVLSDA…LPSDCLKNAV (102 aa). Kelch repeat units lie at residues 296–340, 341–388, 389–444, 446–492, 493–538, and 539–585; these read TLLI…AIGC, KVYV…ELEN, CLYV…SAKL, LFVF…VLGS, QIFI…ASGN, and KLYV…STWK.

In terms of assembly, component of the BCR(KLHL25) E3 ubiquitin ligase complex, at least composed of CUL3, KLHL25 and RBX1.

Its pathway is protein modification; protein ubiquitination. Its function is as follows. Substrate-specific adapter of a BCR (BTB-CUL3-RBX1) E3 ubiquitin ligase complex involved in various processes, such as translation homeostasis and lipid synthesis. The BCR(KLHL25) ubiquitin ligase complex acts by mediating ubiquitination of hypophosphorylated EIF4EBP1 (4E-BP1): ubiquitination and subsequent degradation of hypophosphorylated EIF4EBP1 (4E-BP1) probably serves as a homeostatic mechanism to maintain translation and prevent eIF4E inhibition when eIF4E levels are low. The BCR(KLHL25) complex does not target EIF4EBP1 (4E-BP1) when it is hyperphosphorylated or associated with eIF4E. The BCR(KLHL25) complex also acts as a regulator of lipid synthesis by mediating ubiquitination and degradation of ACLY, thereby inhibiting lipid synthesis. BCR(KLHL25)-mediated degradation of ACLY promotes fatty acid oxidation and is required for differentiation of inducible regulatory T (iTreg) cells. The chain is Kelch-like protein 25 from Mus musculus (Mouse).